The sequence spans 313 residues: Homoserine kinase (313 aa).

Position 92-102 (92-102 (PPGRGLGSSGA)) interacts with ATP.

It belongs to the GHMP kinase family. Homoserine kinase subfamily.

It is found in the cytoplasm. The enzyme catalyses L-homoserine + ATP = O-phospho-L-homoserine + ADP + H(+). The protein operates within amino-acid biosynthesis; L-threonine biosynthesis; L-threonine from L-aspartate: step 4/5. Its function is as follows. Catalyzes the ATP-dependent phosphorylation of L-homoserine to L-homoserine phosphate. This is Homoserine kinase from Aeropyrum pernix (strain ATCC 700893 / DSM 11879 / JCM 9820 / NBRC 100138 / K1).